A 340-amino-acid chain; its full sequence is MKTRSQIEDMVRNASYTRDVMTFLCENNLDPDKVNRVIHHFKYTNSSEWVRNFSKAGYITQMTAREQLTDFCKTIDYKNPLFVQGVGQSKVDLSSGFFNPNHYRIEWRFIALFRRQLKQILSTASRLKGSDINLKNLKFDGYTLQMEVRPLKENNRTARISFKPNTKNSLSICECLKSQLTEAFKYMDVVAAVQSKILPRFERFKLDTTSYELDMIVSFKYEFLRKDEVTQEKKQEVQDNLNLSNYLSNDPKFWMYSSGNKDAWKFNKVNFLPVENPSLKPVEKWHADAIEKSLKAVDAELVKATNEVLEAEKALEQAQSRVQNLTKQRSKLNNALNALN.

This is an uncharacterized protein from Enterobacteria phage T4 (Bacteriophage T4).